Here is a 201-residue protein sequence, read N- to C-terminus: Recombination protein RecR (201 aa).

Residues 60–75 form a C4-type zinc finger; it reads CSVCGNVDTIDPCSIC. The Toprim domain occupies 83-178; it reads ATIIVVEDIA…KVTRLAHGVP (96 aa).

This sequence belongs to the RecR family.

May play a role in DNA repair. It seems to be involved in an RecBC-independent recombinational process of DNA repair. It may act with RecF and RecO. The sequence is that of Recombination protein RecR from Bartonella henselae (strain ATCC 49882 / DSM 28221 / CCUG 30454 / Houston 1) (Rochalimaea henselae).